Here is a 128-residue protein sequence, read N- to C-terminus: UPF0212 protein TGAM_1344 (128 aa).

The protein belongs to the UPF0212 family.

The chain is UPF0212 protein TGAM_1344 from Thermococcus gammatolerans (strain DSM 15229 / JCM 11827 / EJ3).